We begin with the raw amino-acid sequence, 750 residues long: Serine/threonine-protein kinase GE16371 (750 aa).

2 Doublecortin domains span residues 159–245 (LRIK…VEYN) and 315–398 (RIVT…AEDF). The Protein kinase domain maps to 479–737 (YTLGKIIGDG…SEDILDHYWT (259 aa)). Residues 485–493 (IGDGNFAIV) and Lys-508 each bind ATP. The active-site Proton acceptor is Asp-600.

This sequence belongs to the protein kinase superfamily. CAMK Ser/Thr protein kinase family. CaMK subfamily.

The catalysed reaction is L-seryl-[protein] + ATP = O-phospho-L-seryl-[protein] + ADP + H(+). The enzyme catalyses L-threonyl-[protein] + ATP = O-phospho-L-threonyl-[protein] + ADP + H(+). The protein is Serine/threonine-protein kinase GE16371 of Drosophila yakuba (Fruit fly).